The chain runs to 194 residues: Protein GrpE (194 aa).

Polar residues predominate over residues 1 to 13; it reads MENTQENPTSQNP. The interval 1–50 is disordered; it reads MENTQENPTSQNPKPAEETARQAAEAAAPQQEAAANAATDSPASAEQAAL. Residues 21–50 show a composition bias toward low complexity; that stretch reads RQAAEAAAPQQEAAANAATDSPASAEQAAL.

This sequence belongs to the GrpE family. Homodimer.

The protein resides in the cytoplasm. Participates actively in the response to hyperosmotic and heat shock by preventing the aggregation of stress-denatured proteins, in association with DnaK and GrpE. It is the nucleotide exchange factor for DnaK and may function as a thermosensor. Unfolded proteins bind initially to DnaJ; upon interaction with the DnaJ-bound protein, DnaK hydrolyzes its bound ATP, resulting in the formation of a stable complex. GrpE releases ADP from DnaK; ATP binding to DnaK triggers the release of the substrate protein, thus completing the reaction cycle. Several rounds of ATP-dependent interactions between DnaJ, DnaK and GrpE are required for fully efficient folding. In Paraburkholderia xenovorans (strain LB400), this protein is Protein GrpE.